The chain runs to 386 residues: Cystathionine gamma-synthase (386 aa).

Position 198 is an N6-(pyridoxal phosphate)lysine (K198).

This sequence belongs to the trans-sulfuration enzymes family. In terms of assembly, homotetramer. Pyridoxal 5'-phosphate is required as a cofactor.

It is found in the cytoplasm. The catalysed reaction is O-succinyl-L-homoserine + L-cysteine = L,L-cystathionine + succinate + H(+). It functions in the pathway amino-acid biosynthesis; L-methionine biosynthesis via de novo pathway; L-cystathionine from O-succinyl-L-homoserine: step 1/1. Its function is as follows. Catalyzes the formation of L-cystathionine from O-succinyl-L-homoserine (OSHS) and L-cysteine, via a gamma-replacement reaction. In the absence of thiol, catalyzes gamma-elimination to form 2-oxobutanoate, succinate and ammonia. The sequence is that of Cystathionine gamma-synthase (metB) from Escherichia coli (strain K12).